The following is a 194-amino-acid chain: MQLTLASTSPAREKVLNAAGVIPRKVSPGVDEEAAVADLVNPTPAQYVQHLATAKARAVDGELVLGGDSMLLIDGELQGKPHTREETVRRWRQQRGKRAELVTGHALFDAATGQIYEEVVATQIQFAEVSERAIEAYAATGEPLECAGAFTLEALGGWFIESIDGHPSAVIGLSLPALRRGLDYFGYDFSDLWG.

Asp68 (proton acceptor) is an active-site residue.

It belongs to the Maf family. The cofactor is a divalent metal cation.

Its subcellular location is the cytoplasm. The enzyme catalyses a ribonucleoside 5'-triphosphate + H2O = a ribonucleoside 5'-phosphate + diphosphate + H(+). It catalyses the reaction a 2'-deoxyribonucleoside 5'-triphosphate + H2O = a 2'-deoxyribonucleoside 5'-phosphate + diphosphate + H(+). In terms of biological role, nucleoside triphosphate pyrophosphatase. May have a dual role in cell division arrest and in preventing the incorporation of modified nucleotides into cellular nucleic acids. In Corynebacterium jeikeium (strain K411), this protein is Nucleoside triphosphate pyrophosphatase.